Consider the following 324-residue polypeptide: Probable pectinesterase A (324 aa).

Residues 1–19 (MHGSLLKLALLSFSLGSSA) form the signal peptide. Position 142 (glutamine 142) interacts with substrate. Aspartate 165 acts as the Proton donor in catalysis. Aspartate 186 acts as the Nucleophile in catalysis. Arginine 246 and tryptophan 248 together coordinate substrate. Asparagine 285 is a glycosylation site (N-linked (GlcNAc...) asparagine).

This sequence belongs to the pectinesterase family.

The protein resides in the secreted. The catalysed reaction is [(1-&gt;4)-alpha-D-galacturonosyl methyl ester](n) + n H2O = [(1-&gt;4)-alpha-D-galacturonosyl](n) + n methanol + n H(+). Its pathway is glycan metabolism; pectin degradation; 2-dehydro-3-deoxy-D-gluconate from pectin: step 1/5. Functionally, involved in maceration and soft-rotting of plant tissue. This Aspergillus oryzae (strain ATCC 42149 / RIB 40) (Yellow koji mold) protein is Probable pectinesterase A (pmeA).